The primary structure comprises 89 residues: Large ribosomal subunit protein bL27 (89 aa).

Residues 1 to 22 form a disordered region; sequence MAQKKAGGSSRNGRDSAGRRLG.

Belongs to the bacterial ribosomal protein bL27 family.

This chain is Large ribosomal subunit protein bL27, found in Gluconacetobacter diazotrophicus (strain ATCC 49037 / DSM 5601 / CCUG 37298 / CIP 103539 / LMG 7603 / PAl5).